The following is a 669-amino-acid chain: Dymeclin (669 aa).

G2 carries the N-myristoyl glycine lipid modification.

This sequence belongs to the dymeclin family. In terms of assembly, interacts with GOLM1 and PPIB. Post-translationally, myristoylated in vitro; myristoylation is not essential for protein targeting to Golgi compartment.

Its subcellular location is the cytoplasm. The protein resides in the golgi apparatus. It is found in the membrane. In terms of biological role, necessary for correct organization of Golgi apparatus. Involved in bone development. The protein is Dymeclin (DYM) of Pongo abelii (Sumatran orangutan).